The following is a 275-amino-acid chain: Phenylalanine-4-hydroxylase (275 aa).

Fe cation contacts are provided by His-135, His-140, and Glu-181.

The protein belongs to the biopterin-dependent aromatic amino acid hydroxylase family. Fe(2+) serves as cofactor.

The catalysed reaction is (6R)-L-erythro-5,6,7,8-tetrahydrobiopterin + L-phenylalanine + O2 = (4aS,6R)-4a-hydroxy-L-erythro-5,6,7,8-tetrahydrobiopterin + L-tyrosine. Its pathway is amino-acid degradation; L-phenylalanine degradation; acetoacetate and fumarate from L-phenylalanine: step 1/6. This is Phenylalanine-4-hydroxylase (phhA) from Mesorhizobium japonicum (strain LMG 29417 / CECT 9101 / MAFF 303099) (Mesorhizobium loti (strain MAFF 303099)).